We begin with the raw amino-acid sequence, 195 residues long: uncharacterized protein (195 aa).

Disordered stretches follow at residues 1-54 (MPKG…SNKI) and 173-195 (LAGAARGPSQTGTPVAEEAKPIS). Over residues 7–20 (KPNEKKEELEKFAK) the composition is skewed to basic and acidic residues. The segment covering 45-54 (QNDSSSSNKI) has biased composition (polar residues). Residues 48 to 97 (SSSSNKIVLSQAEKDLLRTELDKTEEEISTLKQVLSARQKHAAELKRKLG) are a coiled coil.

This sequence belongs to the TPD52 family.

This is an uncharacterized protein from Caenorhabditis elegans.